The sequence spans 166 residues: Phosphopantetheine adenylyltransferase (166 aa).

Position 11 (serine 11) interacts with substrate. Residues 11-12 and histidine 19 contribute to the ATP site; that span reads SF. Residues lysine 43, valine 80, and arginine 94 each contribute to the substrate site. Residues 95 to 97, glutamate 105, and 130 to 136 contribute to the ATP site; these read GLR and VRTITAT.

This sequence belongs to the bacterial CoaD family. In terms of assembly, homohexamer. It depends on Mg(2+) as a cofactor.

Its subcellular location is the cytoplasm. The catalysed reaction is (R)-4'-phosphopantetheine + ATP + H(+) = 3'-dephospho-CoA + diphosphate. The protein operates within cofactor biosynthesis; coenzyme A biosynthesis; CoA from (R)-pantothenate: step 4/5. Reversibly transfers an adenylyl group from ATP to 4'-phosphopantetheine, yielding dephospho-CoA (dPCoA) and pyrophosphate. This chain is Phosphopantetheine adenylyltransferase, found in Mesorhizobium japonicum (strain LMG 29417 / CECT 9101 / MAFF 303099) (Mesorhizobium loti (strain MAFF 303099)).